The sequence spans 319 residues: Putative protein phosphatase 2C 23 (319 aa).

The PPM-type phosphatase domain maps to 73–314 (AVRMESASCY…DDITVVVACI (242 aa)). 3 residues coordinate Mn(2+): Gly-102, Asp-235, and Asp-305.

Belongs to the PP2C family. The cofactor is Mg(2+).

It catalyses the reaction O-phospho-L-seryl-[protein] + H2O = L-seryl-[protein] + phosphate. The catalysed reaction is O-phospho-L-threonyl-[protein] + H2O = L-threonyl-[protein] + phosphate. The protein is Putative protein phosphatase 2C 23 of Oryza sativa subsp. japonica (Rice).